The sequence spans 439 residues: C4-dicarboxylate transport protein (439 aa).

9 consecutive transmembrane segments (helical) span residues 9 to 29, 45 to 65, 80 to 100, 150 to 170, 186 to 206, 221 to 241, 291 to 311, 334 to 354, and 357 to 377; these read HLYF…YYMP, MIKM…IAGM, LYFE…INVI, GEIL…SAMG, AFFG…FGAM, LGML…VVLG, VVGL…SIYL, ILGV…SGFV, and AATF…ILGI.

It belongs to the dicarboxylate/amino acid:cation symporter (DAACS) (TC 2.A.23) family.

Its subcellular location is the cell inner membrane. Its function is as follows. Responsible for the transport of dicarboxylates such as succinate, fumarate, and malate from the periplasm across the membrane. This is C4-dicarboxylate transport protein from Citrifermentans bemidjiense (strain ATCC BAA-1014 / DSM 16622 / JCM 12645 / Bem) (Geobacter bemidjiensis).